Consider the following 637-residue polypeptide: GTPase-activating protein GYP1 (637 aa).

The span at 1 to 17 (MGVRSAAKEMHERDHNS) shows a compositional bias: basic and acidic residues. Disordered regions lie at residues 1–152 (MGVR…GDRY) and 187–233 (RTLS…NDSK). A compositionally biased stretch (polar residues) spans 18-27 (DSSSLVTSLM). Low complexity predominate over residues 28-45 (KSWRISSASSSKKPSLYK). Positions 46 to 59 (MNTTESTSLPSGYA) are enriched in polar residues. A Phosphoserine modification is found at S69. 2 stretches are compositionally biased toward polar residues: residues 79-91 (QQASTRRTSNSYS) and 98-107 (PTLSTASNES). The segment covering 115-127 (RQHHQRHHHHQQP) has biased composition (basic residues). Composition is skewed to low complexity over residues 128-142 (RHSSSGSVGNNCSNS) and 187-207 (RTLSRKSTSSSINSISNMGTS). Residues 208-223 (AVRNSSSSFTYPQLPQ) show a composition bias toward polar residues. S250 carries the post-translational modification Phosphoserine. A Rab-GAP TBC domain is found at 280–508 (GIPKIHRPVV…RMWDTYLSET (229 aa)). Residues 543-564 (DFQSPTTALSNMTPNNAVEDSG) form a disordered region.

The protein resides in the golgi apparatus. It localises to the golgi stack. Functionally, GTPase-activating protein (GAP) that stimulates specifically the intrinsic GTPase activity of Ypt/Rab-type GTPases YPT1 and YPT7. Functions on the Golgi as a negative regulator of YPT1. Functions on the vacuole as a negative regulator of YPT7. It is also active on SEC4 and YPT51. Provides a catalytic arginine (arginine finger) and glutamine (glutamine finger) in trans to accelerate the GTP hydrolysis rate of the substrate GTPase. This is GTPase-activating protein GYP1 (GYP1) from Saccharomyces cerevisiae (strain ATCC 204508 / S288c) (Baker's yeast).